A 192-amino-acid chain; its full sequence is Cytochrome c4 (192 aa).

Cytochrome c domains are found at residues 12-90 (GDPQ…ATQP) and 99-191 (ELAS…QGLS). The heme c site is built by cysteine 25, cysteine 28, histidine 29, cysteine 120, cysteine 123, and histidine 124.

Binds 2 heme c groups covalently per subunit.

The protein localises to the periplasm. Functionally, diheme, high potential cytochrome c believed to be an intermediate electron donor in an anaerobic electron transport chain. This chain is Cytochrome c4, found in Thiocapsa roseopersicina.